The primary structure comprises 377 residues: Peptide chain release factor 2 (377 aa).

At Gln257 the chain carries N5-methylglutamine.

Belongs to the prokaryotic/mitochondrial release factor family. In terms of processing, methylated by PrmC. Methylation increases the termination efficiency of RF2.

Its subcellular location is the cytoplasm. Peptide chain release factor 2 directs the termination of translation in response to the peptide chain termination codons UGA and UAA. The chain is Peptide chain release factor 2 from Lactiplantibacillus plantarum (strain ATCC BAA-793 / NCIMB 8826 / WCFS1) (Lactobacillus plantarum).